We begin with the raw amino-acid sequence, 505 residues long: Adenylosuccinate synthetase, chloroplastic (505 aa).

Residues 1 to 60 (MTTMNISTLRLDSNPITTSTKSTTHRSGALGYNGSYSCRLLQFQKKNKAPSIIVCSTKPL) constitute a chloroplast transit peptide. Residues 92–98 (GDEGKGK) and 120–122 (GHT) each bind GTP. The active-site Proton acceptor is the aspartate 93. Residues aspartate 93 and glycine 120 each coordinate Mg(2+). IMP-binding positions include 93–96 (DEGK), 118–121 (NAGH), threonine 210, arginine 224, glutamine 304, threonine 319, and arginine 383. Histidine 121 functions as the Proton donor in the catalytic mechanism. Substrate is bound at residue 379 to 385 (TTTGRPR). GTP contacts are provided by residues arginine 385, 411–413 (KLD), and 494–496 (GVG).

The protein belongs to the adenylosuccinate synthetase family. In terms of assembly, homodimer. Mg(2+) is required as a cofactor.

Its subcellular location is the plastid. It is found in the chloroplast. It catalyses the reaction IMP + L-aspartate + GTP = N(6)-(1,2-dicarboxyethyl)-AMP + GDP + phosphate + 2 H(+). The protein operates within purine metabolism; AMP biosynthesis via de novo pathway; AMP from IMP: step 1/2. Its function is as follows. Plays an important role in the de novo pathway and in the salvage pathway of purine nucleotide biosynthesis. Catalyzes the first committed step in the biosynthesis of AMP from IMP. The chain is Adenylosuccinate synthetase, chloroplastic from Nicotiana tabacum (Common tobacco).